We begin with the raw amino-acid sequence, 129 residues long: Small ribosomal subunit protein uS11 (129 aa).

The protein belongs to the universal ribosomal protein uS11 family. Part of the 30S ribosomal subunit. Interacts with proteins S7 and S18. Binds to IF-3.

Functionally, located on the platform of the 30S subunit, it bridges several disparate RNA helices of the 16S rRNA. Forms part of the Shine-Dalgarno cleft in the 70S ribosome. This is Small ribosomal subunit protein uS11 from Thermosipho melanesiensis (strain DSM 12029 / CIP 104789 / BI429).